A 358-amino-acid polypeptide reads, in one-letter code: Cilia- and flagella-associated protein 263 (358 aa).

Coiled-coil stretches lie at residues 93–138 (YKKM…FKRN), 176–200 (RKNS…EMAE), and 266–343 (RTKL…YTKS).

Belongs to the CFAP263 family. In terms of assembly, forms a complex with CFAP184; the interaction is required for functional activity in cilia. Interacts with HAP1 and PCM1.

It is found in the cytoplasm. Its subcellular location is the cytoskeleton. The protein localises to the microtubule organizing center. It localises to the centrosome. The protein resides in the centriolar satellite. It is found in the cell projection. Its subcellular location is the cilium. In terms of biological role, component of centriolar satellites contributing to primary cilium formation. In complex with CFAP263, acts as a regulator of ciliary beating that connects radial spoke 3 (RS3) to the inner dynein arm (IDA) and the nexin-dynein regulatory complex (N-DRC). The complex is positioned parallel to N-DRC and forms a connection between the arch at the base of RS3, the IDA tail and N-DRC. In Danio rerio (Zebrafish), this protein is Cilia- and flagella-associated protein 263 (cfap263).